The sequence spans 63 residues: Megourin-1 (63 aa).

Monomer. In terms of processing, contains four disulfide bonds.

The protein localises to the secreted. Functionally, has antimicrobial activity against Gram-positive bacteria and fungi. The sequence is that of Megourin-1 from Megoura viciae (Vetch aphid).